Reading from the N-terminus, the 393-residue chain is Acetate kinase (393 aa).

Residue Asn8 participates in Mg(2+) binding. Lys15 provides a ligand contact to ATP. Arg91 is a substrate binding site. Asp148 functions as the Proton donor/acceptor in the catalytic mechanism. Residues 206–210 (HLGSG), 280–282 (DMR), and 325–329 (GVGEN) each bind ATP. Glu376 lines the Mg(2+) pocket.

Belongs to the acetokinase family. In terms of assembly, homodimer. The cofactor is Mg(2+). Requires Mn(2+) as cofactor.

It localises to the cytoplasm. The enzyme catalyses acetate + ATP = acetyl phosphate + ADP. Its pathway is metabolic intermediate biosynthesis; acetyl-CoA biosynthesis; acetyl-CoA from acetate: step 1/2. Its function is as follows. Catalyzes the formation of acetyl phosphate from acetate and ATP. Can also catalyze the reverse reaction. The protein is Acetate kinase of Rhizobium meliloti (Ensifer meliloti).